The following is a 310-amino-acid chain: tRNA dimethylallyltransferase (310 aa).

13-20 (GPTASGKT) provides a ligand contact to ATP. A substrate-binding site is contributed by 15 to 20 (TASGKT). Interaction with substrate tRNA stretches follow at residues 38 to 41 (DSAL), 162 to 166 (QRLSR), 243 to 248 (RCVGYR), and 276 to 283 (KRQITWLR).

Belongs to the IPP transferase family. Monomer. Mg(2+) is required as a cofactor.

It catalyses the reaction adenosine(37) in tRNA + dimethylallyl diphosphate = N(6)-dimethylallyladenosine(37) in tRNA + diphosphate. Functionally, catalyzes the transfer of a dimethylallyl group onto the adenine at position 37 in tRNAs that read codons beginning with uridine, leading to the formation of N6-(dimethylallyl)adenosine (i(6)A). The polypeptide is tRNA dimethylallyltransferase (Aliivibrio fischeri (strain ATCC 700601 / ES114) (Vibrio fischeri)).